The primary structure comprises 345 residues: UDP-N-acetylenolpyruvoylglucosamine reductase (345 aa).

The 204-residue stretch at 15–218 (VDVYAEKVII…NTIIFLRYKK (204 aa)) folds into the FAD-binding PCMH-type domain. R161 is an active-site residue. Catalysis depends on S230, which acts as the Proton donor. Residue E327 is part of the active site.

The protein belongs to the MurB family. FAD serves as cofactor.

The protein localises to the cytoplasm. The enzyme catalyses UDP-N-acetyl-alpha-D-muramate + NADP(+) = UDP-N-acetyl-3-O-(1-carboxyvinyl)-alpha-D-glucosamine + NADPH + H(+). It participates in cell wall biogenesis; peptidoglycan biosynthesis. Cell wall formation. The polypeptide is UDP-N-acetylenolpyruvoylglucosamine reductase (Blochmanniella floridana).